Here is a 276-residue protein sequence, read N- to C-terminus: Secreted LysM effector LysM10 (276 aa).

Residues 1–22 form the signal peptide; sequence MLLSLVKFGILSVFLLAQEAVA. 3 N-linked (GlcNAc...) asparagine glycosylation sites follow: Asn27, Asn104, and Asn140. Positions 219 to 264 constitute a LysM domain; sequence KTYIAKEDDTCKSISEAQSISTDRLVEVNHLDYSCSSLTSGTALCI. N-linked (GlcNAc...) asparagine glycosylation occurs at Asn267.

Belongs to the secreted LysM effector family.

The protein localises to the secreted. In terms of biological role, secreted LysM effector that might have a role in sequestration of chitin oligosaccharides (breakdown products of fungal cell walls that are released during invasion and act as triggers of host immunity) to dampen host defense. The chain is Secreted LysM effector LysM10 from Penicillium expansum (Blue mold rot fungus).